A 453-amino-acid chain; its full sequence is Trigger factor (453 aa).

The PPIase FKBP-type domain occupies 171–256 (GDRITISFKG…VSLIEAPEEL (86 aa)).

It belongs to the FKBP-type PPIase family. Tig subfamily.

It is found in the cytoplasm. It catalyses the reaction [protein]-peptidylproline (omega=180) = [protein]-peptidylproline (omega=0). In terms of biological role, involved in protein export. Acts as a chaperone by maintaining the newly synthesized protein in an open conformation. Functions as a peptidyl-prolyl cis-trans isomerase. The chain is Trigger factor from Nitrobacter winogradskyi (strain ATCC 25391 / DSM 10237 / CIP 104748 / NCIMB 11846 / Nb-255).